A 141-amino-acid chain; its full sequence is Large ribosomal subunit protein uL11 (141 aa).

The protein belongs to the universal ribosomal protein uL11 family. In terms of assembly, part of the ribosomal stalk of the 50S ribosomal subunit. Interacts with L10 and the large rRNA to form the base of the stalk. L10 forms an elongated spine to which L12 dimers bind in a sequential fashion forming a multimeric L10(L12)X complex. One or more lysine residues are methylated.

In terms of biological role, forms part of the ribosomal stalk which helps the ribosome interact with GTP-bound translation factors. In Pseudothermotoga lettingae (strain ATCC BAA-301 / DSM 14385 / NBRC 107922 / TMO) (Thermotoga lettingae), this protein is Large ribosomal subunit protein uL11.